The sequence spans 37 residues: Dolichyl-diphosphooligosaccharide--protein glycosyltransferase subunit 4A (37 aa).

Over 1–7 (MIDDQDL) the chain is Lumenal. The helical transmembrane segment at 8-28 (GFIANFLGIFIFALVIAYHYV) threads the bilayer. Residues 29–37 (TADPKYEAT) lie on the Cytoplasmic side of the membrane.

Belongs to the OST4 family. As to quaternary structure, component of the oligosaccharyltransferase (OST) complex.

The protein localises to the endoplasmic reticulum membrane. In terms of biological role, subunit of the oligosaccharyl transferase (OST) complex that catalyzes the initial transfer of a defined glycan (Glc(3)Man(9)GlcNAc(2) in eukaryotes) from the lipid carrier dolichol-pyrophosphate to an asparagine residue within an Asn-X-Ser/Thr consensus motif in nascent polypeptide chains, the first step in protein N-glycosylation. N-glycosylation occurs cotranslationally and the complex associates with the Sec61 complex at the channel-forming translocon complex that mediates protein translocation across the endoplasmic reticulum (ER). All subunits are required for a maximal enzyme activity. This chain is Dolichyl-diphosphooligosaccharide--protein glycosyltransferase subunit 4A (OST4A), found in Arabidopsis thaliana (Mouse-ear cress).